The primary structure comprises 98 residues: HssA/B-like protein 39 (98 aa).

Residues 1-21 (MTLFSSISSMSTSMSGSKSSI) are disordered.

This sequence belongs to the hssA/B family.

The polypeptide is HssA/B-like protein 39 (hssl39) (Dictyostelium discoideum (Social amoeba)).